The primary structure comprises 229 residues: MDQNKLKQEAAQRAAEFVEDGMTIGLGTGSTVVYLVEAIAQRIKDEHLNLTGVATSVRTRKQAESLGIPMKALDEVGQIDLTIDGADEVDKHFQGIKGGGRSHLIEKIVAINSARNIWIVDETKLVDTLGKFPLPLEVIPFGSGKLLQRLADEGLKPAYRLNEDGSKALTDSKNYIIDLHLGKIEHPHLLAEWLNKQVGIVEHGLFLDLVKTVVVGTTHGPEILDAHRG.

Residues 28-31 (TGST), 84-87 (DGAD), and 97-100 (KGGG) each bind substrate. Catalysis depends on glutamate 106, which acts as the Proton acceptor. Residue lysine 124 coordinates substrate.

This sequence belongs to the ribose 5-phosphate isomerase family. Homodimer.

It catalyses the reaction aldehydo-D-ribose 5-phosphate = D-ribulose 5-phosphate. It participates in carbohydrate degradation; pentose phosphate pathway; D-ribose 5-phosphate from D-ribulose 5-phosphate (non-oxidative stage): step 1/1. In terms of biological role, catalyzes the reversible conversion of ribose-5-phosphate to ribulose 5-phosphate. This chain is Ribose-5-phosphate isomerase A, found in Lacticaseibacillus paracasei (strain ATCC 334 / BCRC 17002 / CCUG 31169 / CIP 107868 / KCTC 3260 / NRRL B-441) (Lactobacillus paracasei).